The chain runs to 1125 residues: Non-structural polyprotein 1A (1125 aa).

Residues 131–218 (VHQVMEKTRE…QKRLKEKENA (88 aa)) are a coiled coil. A run of 6 helical transmembrane segments spans residues 220–240 (VSVG…FGLI), 379–398 (VMSY…VLAG), 407–427 (APFI…CVAV), 437–457 (FILF…LLWL), 479–499 (ALVY…GVTL), and 507–527 (ILMF…CTTI). Active-site charge relay system; for serine protease activity residues include His600, Asp632, and Ser697. At Tyr834 the chain carries O-(5'-phospho-RNA)-tyrosine.

Belongs to the astroviridae polyprotein 1A family. In terms of assembly, monomer. In terms of processing, cleaved by the viral and host proteases. The protease is probably autocatalytically cleaved.

The protein resides in the host membrane. It carries out the reaction RNA(n) + a ribonucleoside 5'-triphosphate = RNA(n+1) + diphosphate. Its function is as follows. Responsible for the cleavage of the polyprotein into functional products. In terms of biological role, protein covalently attached to the 5' extremity of the genomic and subgenomic RNAs. It may serve as a primer for the replicase. This Turkey astrovirus 2 (TAstV-2) protein is Non-structural polyprotein 1A (ORF1).